Reading from the N-terminus, the 254-residue chain is NADPH-dependent ferric-chelate reductase (254 aa).

The region spanning 15–136 (LRFRELTVLR…AGPRGSLVVP (122 aa)) is the FAD-binding FR-type domain.

It belongs to the SIP oxidoreductase family.

Its subcellular location is the cytoplasm. It catalyses the reaction 2 a Fe(II)-siderophore + NADP(+) + H(+) = 2 a Fe(III)-siderophore + NADPH. In terms of biological role, plays a role in iron homeostasis under excess nickel conditions. This chain is NADPH-dependent ferric-chelate reductase (yqjH), found in Escherichia coli (strain K12).